We begin with the raw amino-acid sequence, 295 residues long: Inorganic pyrophosphatase 1 (295 aa).

Asp-19 (nucleophile) is an active-site residue. Mg(2+) contacts are provided by Asp-19 and Asp-21. Asp-21 (proton donor) is an active-site residue. The substrate site is built by Asp-30 and Asp-105. Asp-190 contributes to the Mg(2+) binding site.

The protein belongs to the HAD-like hydrolase superfamily. As to quaternary structure, tetramer. It depends on Mg(2+) as a cofactor. Fe(2+) is required as a cofactor. The cofactor is Ni(2+). Requires Co(2+) as cofactor. Mn(2+) serves as cofactor.

It carries out the reaction diphosphate + H2O = 2 phosphate + H(+). Catalyzes the specific cleavage of pyrophosphate. This chain is Inorganic pyrophosphatase 1 (PS2), found in Arabidopsis thaliana (Mouse-ear cress).